Reading from the N-terminus, the 1251-residue chain is Immunoglobulin-like and fibronectin type III domain-containing protein 1 (1251 aa).

Positions 29 to 119 (PDFEQKPVTS…GEAACSVRLT (91 aa)) constitute an Ig-like 1 domain. The disordered stretch occupies residues 61–81 (RWQNSKGDLSDSSKYKISSSP). Residues 188–221 (IVDYRGMLRRLQEMKKEQEDKMAQYINTISSLRH) are a coiled coil. In terms of domain architecture, Ig-like 2 spans 309-398 (PRVVVPLAET…SSAWLVVEAG (90 aa)). Residues 403-433 (LQSTSADHKLQSRRSGKDGRLDIYGERRDAT) are compositionally biased toward basic and acidic residues. The disordered stretch occupies residues 403–454 (LQSTSADHKLQSRRSGKDGRLDIYGERRDATRSSTSRYKPGTGSFSKDAQGP). Polar residues predominate over residues 434 to 449 (RSSTSRYKPGTGSFSK). The Ig-like 3 domain maps to 454–539 (PMGHFSQGLA…GDQQSEATLT (86 aa)). 3 Fibronectin type-III domains span residues 646–741 (PPQG…VAPE), 746–845 (APSA…MRPP), and 847–942 (LVRN…AMPV). An Ig-like 4 domain is found at 946–1030 (PKFLVDSSTK…LRTLQGKEVA (85 aa)). The Fibronectin type-III 4 domain occupies 1043–1137 (APGPIHLQEN…TSQPWCIPRQ (95 aa)). Residues 1151–1245 (PDLSQKPRFL…GQAVSTATLI (95 aa)) enclose the Ig-like 5 domain.

As to quaternary structure, interacts with FLNC. Interacts with KY. Expressed in skeletal muscle.

The protein localises to the nucleus. It localises to the cytoplasm. The protein resides in the myofibril. It is found in the sarcomere. Its subcellular location is the z line. In Homo sapiens (Human), this protein is Immunoglobulin-like and fibronectin type III domain-containing protein 1 (IGFN1).